Here is a 158-residue protein sequence, read N- to C-terminus: Probable deoxyuridine 5'-triphosphate nucleotidohydrolase (158 aa).

This sequence belongs to the dUTPase family. It depends on Mg(2+) as a cofactor.

The catalysed reaction is dUTP + H2O = dUMP + diphosphate + H(+). The protein operates within pyrimidine metabolism; dUMP biosynthesis; dUMP from dCTP (dUTP route): step 1/2. In terms of biological role, this enzyme is involved in nucleotide metabolism: it produces dUMP, the immediate precursor of thymidine nucleotides and it decreases the intracellular concentration of dUTP so that uracil cannot be incorporated into DNA. It does probably not deaminate dCTP. In Sulfolobus islandicus rod-shaped virus 1 (SIRV-1), this protein is Probable deoxyuridine 5'-triphosphate nucleotidohydrolase.